The primary structure comprises 99 residues: Keratinocyte differentiation-associated protein (99 aa).

An N-terminal signal peptide occupies residues 1–22 (MKIPVLPAVVLLSLLALHSAQG).

In terms of tissue distribution, highly expressed in skin, but not detectable in any other tissue examined. Expression restricted to cornified/stratified epithelia and not detected in non-cornified/stratified epithelia.

It is found in the secreted. In terms of biological role, may act as a soluble regulator of keratinocyte differentiation. May play an important role in embryonic skin morphogenesis. The chain is Keratinocyte differentiation-associated protein from Canis lupus familiaris (Dog).